Consider the following 690-residue polypeptide: Protein hook (690 aa).

The 117-residue stretch at 6–122 folds into the Calponin-homology (CH) domain; it reads MEIYESLIRW…RLLQLILGCA (117 aa). Coiled coils occupy residues 134 to 515 and 546 to 577; these read QIME…HHAE and ETTQ…QAAD.

It belongs to the hook family. As to quaternary structure, homodimer. Interacts with microtubules via its N-terminus.

The protein resides in the cytoplasm. Its subcellular location is the cytoskeleton. It localises to the endosome. Functionally, involved in endocytic trafficking. Probably acts as a cytoskeletal linker protein that tethers endosome vesicles to the cytoskeleton. The chain is Protein hook from Anopheles gambiae (African malaria mosquito).